Reading from the N-terminus, the 345-residue chain is Phosphoribosylformylglycinamidine cyclo-ligase (345 aa).

The protein belongs to the AIR synthase family.

The protein resides in the cytoplasm. The enzyme catalyses 2-formamido-N(1)-(5-O-phospho-beta-D-ribosyl)acetamidine + ATP = 5-amino-1-(5-phospho-beta-D-ribosyl)imidazole + ADP + phosphate + H(+). It participates in purine metabolism; IMP biosynthesis via de novo pathway; 5-amino-1-(5-phospho-D-ribosyl)imidazole from N(2)-formyl-N(1)-(5-phospho-D-ribosyl)glycinamide: step 2/2. This chain is Phosphoribosylformylglycinamidine cyclo-ligase, found in Actinobacillus pleuropneumoniae serotype 5b (strain L20).